Reading from the N-terminus, the 321-residue chain is tRNA dimethylallyltransferase (321 aa).

Gly24–Ser31 is a binding site for ATP. Thr26–Ser31 contacts substrate. 2 interaction with substrate tRNA regions span residues Asp49–Gln52 and Gln172–Arg176.

The protein belongs to the IPP transferase family. In terms of assembly, monomer. It depends on Mg(2+) as a cofactor.

The catalysed reaction is adenosine(37) in tRNA + dimethylallyl diphosphate = N(6)-dimethylallyladenosine(37) in tRNA + diphosphate. In terms of biological role, catalyzes the transfer of a dimethylallyl group onto the adenine at position 37 in tRNAs that read codons beginning with uridine, leading to the formation of N6-(dimethylallyl)adenosine (i(6)A). In Mesorhizobium japonicum (strain LMG 29417 / CECT 9101 / MAFF 303099) (Mesorhizobium loti (strain MAFF 303099)), this protein is tRNA dimethylallyltransferase.